The chain runs to 425 residues: Gamma-glutamyl phosphate reductase (425 aa).

This sequence belongs to the gamma-glutamyl phosphate reductase family.

Its subcellular location is the cytoplasm. The catalysed reaction is L-glutamate 5-semialdehyde + phosphate + NADP(+) = L-glutamyl 5-phosphate + NADPH + H(+). It participates in amino-acid biosynthesis; L-proline biosynthesis; L-glutamate 5-semialdehyde from L-glutamate: step 2/2. Its function is as follows. Catalyzes the NADPH-dependent reduction of L-glutamate 5-phosphate into L-glutamate 5-semialdehyde and phosphate. The product spontaneously undergoes cyclization to form 1-pyrroline-5-carboxylate. The polypeptide is Gamma-glutamyl phosphate reductase (Symbiobacterium thermophilum (strain DSM 24528 / JCM 14929 / IAM 14863 / T)).